Reading from the N-terminus, the 254-residue chain is PF03932 family protein CutC (254 aa).

It belongs to the CutC family.

The protein localises to the cytoplasm. The polypeptide is PF03932 family protein CutC (Yersinia pseudotuberculosis serotype I (strain IP32953)).